The following is a 1024-amino-acid chain: Error-prone DNA polymerase (1024 aa).

This sequence belongs to the DNA polymerase type-C family. DnaE2 subfamily.

It is found in the cytoplasm. The catalysed reaction is DNA(n) + a 2'-deoxyribonucleoside 5'-triphosphate = DNA(n+1) + diphosphate. Functionally, DNA polymerase involved in damage-induced mutagenesis and translesion synthesis (TLS). It is not the major replicative DNA polymerase. This Vibrio parahaemolyticus serotype O3:K6 (strain RIMD 2210633) protein is Error-prone DNA polymerase.